The chain runs to 740 residues: ATP-dependent DNA helicase Hel308 (740 aa).

Residues Gln28 and Ile46–Thr53 contribute to the ATP site. Positions Arg33 to Glu204 constitute a Helicase ATP-binding domain. The DEAH box motif lies at Asp149–His152. The Helicase C-terminal domain maps to Glu236–Ser436. Positions Val716–Gly740 are disordered. Positions Gln726–Gly740 are enriched in polar residues.

It belongs to the helicase family. Hel308 subfamily. As to quaternary structure, monomer.

The enzyme catalyses Couples ATP hydrolysis with the unwinding of duplex DNA by translocating in the 3'-5' direction.. It carries out the reaction ATP + H2O = ADP + phosphate + H(+). In terms of biological role, DNA-dependent ATPase and 3'-5' DNA helicase that may be involved in repair of stalled replication forks. The polypeptide is ATP-dependent DNA helicase Hel308 (Methanocella arvoryzae (strain DSM 22066 / NBRC 105507 / MRE50)).